A 114-amino-acid polypeptide reads, in one-letter code: Iron-sulfur cluster insertion protein ErpA (114 aa).

Positions 42, 106, and 108 each coordinate iron-sulfur cluster.

Belongs to the HesB/IscA family. In terms of assembly, homodimer. It depends on iron-sulfur cluster as a cofactor.

Required for insertion of 4Fe-4S clusters for at least IspG. This chain is Iron-sulfur cluster insertion protein ErpA, found in Buchnera aphidicola subsp. Acyrthosiphon pisum (strain APS) (Acyrthosiphon pisum symbiotic bacterium).